The sequence spans 352 residues: Chymopapain (352 aa).

The first 18 residues, 1-18, serve as a signal peptide directing secretion; the sequence is MATMSSISKIIFLATCLI. Residues 19–134 constitute a propeptide, activation peptide; sequence IHMGLSSADF…EDFTYKHVTN (116 aa). Residue Asn86 is glycosylated (N-linked (GlcNAc...) asparagine). Intrachain disulfides connect Cys156-Cys197, Cys190-Cys229, and Cys287-Cys338. The active site involves Cys159. Residues His293 and Asn313 contribute to the active site.

This sequence belongs to the peptidase C1 family.

It catalyses the reaction Specificity similar to that of papain.. Its function is as follows. Cysteine proteinase with a high level of diversity in substrate specificity. The protein is Chymopapain of Carica papaya (Papaya).